Here is a 673-residue protein sequence, read N- to C-terminus: UvrABC system protein B (673 aa).

The Helicase ATP-binding domain occupies 26 to 414 (EGLEDGLAHQ…GDEVVDQVVR (389 aa)). 39–46 (GVTGSGKT) provides a ligand contact to ATP. The Beta-hairpin signature appears at 92–115 (YYDYYQPEAYVPSSDTFIEKDASI). The region spanning 431–597 (QVDDLLSEIR…GLNKKVVDIL (167 aa)) is the Helicase C-terminal domain. Residues 633–668 (QQKIHELEGQMMQHAQNLEFEEAAQIRDQLHQLREL) form the UVR domain.

This sequence belongs to the UvrB family. Forms a heterotetramer with UvrA during the search for lesions. Interacts with UvrC in an incision complex.

It is found in the cytoplasm. In terms of biological role, the UvrABC repair system catalyzes the recognition and processing of DNA lesions. A damage recognition complex composed of 2 UvrA and 2 UvrB subunits scans DNA for abnormalities. Upon binding of the UvrA(2)B(2) complex to a putative damaged site, the DNA wraps around one UvrB monomer. DNA wrap is dependent on ATP binding by UvrB and probably causes local melting of the DNA helix, facilitating insertion of UvrB beta-hairpin between the DNA strands. Then UvrB probes one DNA strand for the presence of a lesion. If a lesion is found the UvrA subunits dissociate and the UvrB-DNA preincision complex is formed. This complex is subsequently bound by UvrC and the second UvrB is released. If no lesion is found, the DNA wraps around the other UvrB subunit that will check the other stand for damage. The sequence is that of UvrABC system protein B from Salmonella paratyphi A (strain ATCC 9150 / SARB42).